Here is a 414-residue protein sequence, read N- to C-terminus: Gamma-glutamyl phosphate reductase (414 aa).

Belongs to the gamma-glutamyl phosphate reductase family.

The protein resides in the cytoplasm. It carries out the reaction L-glutamate 5-semialdehyde + phosphate + NADP(+) = L-glutamyl 5-phosphate + NADPH + H(+). The protein operates within amino-acid biosynthesis; L-proline biosynthesis; L-glutamate 5-semialdehyde from L-glutamate: step 2/2. Catalyzes the NADPH-dependent reduction of L-glutamate 5-phosphate into L-glutamate 5-semialdehyde and phosphate. The product spontaneously undergoes cyclization to form 1-pyrroline-5-carboxylate. The protein is Gamma-glutamyl phosphate reductase of Francisella philomiragia subsp. philomiragia (strain ATCC 25017 / CCUG 19701 / FSC 153 / O#319-036).